Consider the following 304-residue polypeptide: N-acetylmuramic acid 6-phosphate etherase (304 aa).

An SIS domain is found at 62–225 (IVQAFQNGGR…TTASMVMIGK (164 aa)). Residue glutamate 90 is the Proton donor of the active site. Residue glutamate 121 is part of the active site.

The protein belongs to the GCKR-like family. MurNAc-6-P etherase subfamily. In terms of assembly, homodimer.

It carries out the reaction N-acetyl-D-muramate 6-phosphate + H2O = N-acetyl-D-glucosamine 6-phosphate + (R)-lactate. Its pathway is amino-sugar metabolism; 1,6-anhydro-N-acetylmuramate degradation. It functions in the pathway amino-sugar metabolism; N-acetylmuramate degradation. It participates in cell wall biogenesis; peptidoglycan recycling. In terms of biological role, specifically catalyzes the cleavage of the D-lactyl ether substituent of MurNAc 6-phosphate, producing GlcNAc 6-phosphate and D-lactate. Together with AnmK, is also required for the utilization of anhydro-N-acetylmuramic acid (anhMurNAc) either imported from the medium or derived from its own cell wall murein, and thus plays a role in cell wall recycling. The sequence is that of N-acetylmuramic acid 6-phosphate etherase from Actinobacillus pleuropneumoniae serotype 7 (strain AP76).